The chain runs to 127 residues: Ycf91-like protein (127 aa).

Belongs to the ycf91 family.

The protein is Ycf91-like protein of Nostoc sp. (strain PCC 7120 / SAG 25.82 / UTEX 2576).